A 475-amino-acid chain; its full sequence is Ribulose bisphosphate carboxylase large chain (475 aa).

The propeptide occupies 1–2; that stretch reads MS. N-acetylproline is present on P3. Residue K14 is modified to N6,N6,N6-trimethyllysine. Substrate-binding residues include N123 and T173. K175 (proton acceptor) is an active-site residue. K177 serves as a coordination point for substrate. K201, D203, and E204 together coordinate Mg(2+). Residue K201 is modified to N6-carboxylysine. The active-site Proton acceptor is the H294. Substrate contacts are provided by R295, H327, and S379.

It belongs to the RuBisCO large chain family. Type I subfamily. In terms of assembly, heterohexadecamer of 8 large chains and 8 small chains; disulfide-linked. The disulfide link is formed within the large subunit homodimers. Mg(2+) serves as cofactor. The disulfide bond which can form in the large chain dimeric partners within the hexadecamer appears to be associated with oxidative stress and protein turnover.

It localises to the plastid. The protein resides in the chloroplast. The enzyme catalyses 2 (2R)-3-phosphoglycerate + 2 H(+) = D-ribulose 1,5-bisphosphate + CO2 + H2O. It carries out the reaction D-ribulose 1,5-bisphosphate + O2 = 2-phosphoglycolate + (2R)-3-phosphoglycerate + 2 H(+). Its function is as follows. RuBisCO catalyzes two reactions: the carboxylation of D-ribulose 1,5-bisphosphate, the primary event in carbon dioxide fixation, as well as the oxidative fragmentation of the pentose substrate in the photorespiration process. Both reactions occur simultaneously and in competition at the same active site. The chain is Ribulose bisphosphate carboxylase large chain from Pinus longaeva (Great Basin bristlecone pine).